The sequence spans 372 residues: Cell division protein FtsZ 1 (372 aa).

GTP contacts are provided by residues 51-55 (GAGCN), 138-140 (GTG), glutamate 169, arginine 173, and aspartate 216. The disordered stretch occupies residues 351–372 (QEETPEPSEEEVPPVKIDIPEL). A compositionally biased stretch (acidic residues) spans 353–362 (ETPEPSEEEV).

The protein belongs to the FtsZ family. In terms of assembly, homodimer. Polymerizes to form a dynamic ring structure in a strictly GTP-dependent manner. Interacts directly with several other division proteins.

Its subcellular location is the cytoplasm. Functionally, essential cell division protein that forms a contractile ring structure (Z ring) at the future cell division site. The regulation of the ring assembly controls the timing and the location of cell division. One of the functions of the FtsZ ring is to recruit other cell division proteins to the septum to produce a new cell wall between the dividing cells. Binds GTP and shows GTPase activity. This Pyrococcus abyssi (strain GE5 / Orsay) protein is Cell division protein FtsZ 1.